The sequence spans 359 residues: MQAATVVINRRALRHNLQRLRELAPASKMVAVVKANAYGHGLLETARTLPDADAFGVARLEEALRLRAGGITKPVLLLEGFFDARDLPTISAQHFHTAVHNEEQLAALEEASLDEPVTVWMKLDTGMHRLGVRPEQAEAFYHRLTQCKNVRQPVNIVSHFARADEPKCGATEKQLAIFNTFCEGKPGQRSIAASGGILLWPQSHFDWVRPGIILYGVSPLEDRSIGADFGCQPVMSLTSSLIAVREHKAGEPVGYGGTWVSERDTRLGVVAMGYGDGYPRAAPSGTPVLVNGREVPIVGRVAMDMICVDLGPQAQDKAGDPVILWGEGLPVERIAEMTKVSAYELITRLTSRVAMKYVD.

Catalysis depends on K34, which acts as the Proton acceptor; specific for D-alanine. An N6-(pyridoxal phosphate)lysine modification is found at K34. Residue R129 coordinates substrate. The active-site Proton acceptor; specific for L-alanine is the Y255. Residue M303 coordinates substrate.

This sequence belongs to the alanine racemase family. Monomer but homodimer in the presence of the substrate. Requires pyridoxal 5'-phosphate as cofactor.

The enzyme catalyses L-alanine = D-alanine. The protein operates within amino-acid biosynthesis; D-alanine biosynthesis; D-alanine from L-alanine: step 1/1. It participates in cell wall biogenesis; peptidoglycan biosynthesis. Functionally, catalyzes the interconversion of L-alanine and D-alanine. In Shigella sonnei, this protein is Alanine racemase, biosynthetic (alr).